A 341-amino-acid chain; its full sequence is Protein phosphatase methylesterase 1 (341 aa).

The interval 1 to 24 (MAFRKEELSQTLYENESEQSSETK) is disordered. Residues 9–20 (SQTLYENESEQS) are compositionally biased toward polar residues. Residues S153, D178, and H304 contribute to the active site.

Belongs to the AB hydrolase superfamily.

It carries out the reaction [phosphatase 2A protein]-C-terminal L-leucine methyl ester + H2O = [phosphatase 2A protein]-C-terminal L-leucine + methanol + H(+). Functionally, demethylates proteins that have been reversibly carboxymethylated. Demethylates the phosphatase PP2A catalytic subunit. The polypeptide is Protein phosphatase methylesterase 1 (ppe1) (Schizosaccharomyces pombe (strain 972 / ATCC 24843) (Fission yeast)).